Here is a 201-residue protein sequence, read N- to C-terminus: Bradykinin potentiating and C-type natriuretic peptides (201 aa).

The signal sequence occupies residues 1–23 (MFVSRLAASGLLLLALLAVSLDG). The propeptide occupies 24–47 (KPVQQWSQNWPGPKVPPLVVQQWS). At glutamine 48 the chain carries Pyrrolidone carboxylic acid. Residues 58–60 (LVV) constitute a propeptide that is removed on maturation. A Pyrrolidone carboxylic acid modification is found at glutamine 61. 2 consecutive propeptides follow at residues 67-95 (TQLQ…AALD) and 107-179 (GSKA…LAKK). The interval 90–172 (PDAALDTPPA…GGGGGGGARR (83 aa)) is disordered. Low complexity predominate over residues 120 to 130 (SKGASATSTAS). Positions 132 to 142 (PMRDLRTDGKQ) are enriched in basic and acidic residues. A compositionally biased stretch (gly residues) spans 159-170 (PGGGGGGGGGGA). Cysteines 185 and 201 form a disulfide.

In the N-terminal section; belongs to the bradykinin-potentiating peptide family. The protein in the central section; belongs to the bradykinin inhibitor peptide family. This sequence in the C-terminal section; belongs to the natriuretic peptide family. Venom gland.

Its subcellular location is the secreted. Inhibits the activity of the angiotensin-converting enzyme (ACE) by a preferential interaction with its C-domain. May also potentiate the hypotensive effects of bradykinin. Its function is as follows. Antagonizes the vasodilatory actions of bradykinin at the B2 bradykinin receptor. In terms of biological role, has a vasorelaxant activity in rat aortic strips and a diuretic potency in anesthetized rats. May act by activating natriuretic receptors (NPR1 and/or NPR2). The protein is Bradykinin potentiating and C-type natriuretic peptides of Sistrurus catenatus edwardsii (Desert massasauga).